The primary structure comprises 102 residues: Urease subunit beta (102 aa).

Belongs to the urease beta subunit family. In terms of assembly, heterotrimer of UreA (gamma), UreB (beta) and UreC (alpha) subunits. Three heterotrimers associate to form the active enzyme.

It localises to the cytoplasm. The enzyme catalyses urea + 2 H2O + H(+) = hydrogencarbonate + 2 NH4(+). The protein operates within nitrogen metabolism; urea degradation; CO(2) and NH(3) from urea (urease route): step 1/1. This is Urease subunit beta from Methylibium petroleiphilum (strain ATCC BAA-1232 / LMG 22953 / PM1).